We begin with the raw amino-acid sequence, 256 residues long: Trypsin, alkaline B (256 aa).

The N-terminal stretch at 1–17 is a signal peptide; sequence MRLFLALLALGFAAVAA. The propeptide at 18–24 is activation peptide; sequence VPANPQR. The Peptidase S1 domain occupies 25-256; it reads IVGGSTTTIQ…RFANWIRNNS (232 aa). Cys55 and Cys71 form a disulfide bridge. Active-site charge relay system residues include His70 and Asp115. 2 cysteine pairs are disulfide-bonded: Cys180-Cys197 and Cys209-Cys233. Residue Ser213 is the Charge relay system of the active site.

Belongs to the peptidase S1 family. In terms of tissue distribution, midgut.

The protein localises to the secreted. It localises to the extracellular space. The catalysed reaction is Preferential cleavage: Arg-|-Xaa, Lys-|-Xaa.. This chain is Trypsin, alkaline B, found in Manduca sexta (Tobacco hawkmoth).